Consider the following 171-residue polypeptide: Ribosome maturation factor RimM (171 aa).

The region spanning 97–169 is the PRC barrel domain; it reads DGEFYYHEII…RVDVSIMEGL (73 aa).

It belongs to the RimM family. Binds ribosomal protein uS19.

It is found in the cytoplasm. Its function is as follows. An accessory protein needed during the final step in the assembly of 30S ribosomal subunit, possibly for assembly of the head region. Essential for efficient processing of 16S rRNA. May be needed both before and after RbfA during the maturation of 16S rRNA. It has affinity for free ribosomal 30S subunits but not for 70S ribosomes. The chain is Ribosome maturation factor RimM from Lactococcus lactis subsp. lactis (strain IL1403) (Streptococcus lactis).